The primary structure comprises 113 residues: Large ribosomal subunit protein uL24 (113 aa).

This sequence belongs to the universal ribosomal protein uL24 family. In terms of assembly, part of the 50S ribosomal subunit.

In terms of biological role, one of two assembly initiator proteins, it binds directly to the 5'-end of the 23S rRNA, where it nucleates assembly of the 50S subunit. Its function is as follows. One of the proteins that surrounds the polypeptide exit tunnel on the outside of the subunit. This is Large ribosomal subunit protein uL24 from Chlamydia abortus (strain DSM 27085 / S26/3) (Chlamydophila abortus).